We begin with the raw amino-acid sequence, 346 residues long: Dihydroorotase (346 aa).

Zn(2+) is bound by residues H14 and H16. Substrate is bound by residues 16 to 18 and N42; that span reads HLR. Zn(2+) contacts are provided by K100, H137, and H175. K100 is subject to N6-carboxylysine. A substrate-binding site is contributed by H137. L220 contacts substrate. D248 contributes to the Zn(2+) binding site. D248 is a catalytic residue. Positions 252 and 264 each coordinate substrate.

The protein belongs to the metallo-dependent hydrolases superfamily. DHOase family. Class II DHOase subfamily. Homodimer. Zn(2+) serves as cofactor.

The enzyme catalyses (S)-dihydroorotate + H2O = N-carbamoyl-L-aspartate + H(+). Its pathway is pyrimidine metabolism; UMP biosynthesis via de novo pathway; (S)-dihydroorotate from bicarbonate: step 3/3. Functionally, catalyzes the reversible cyclization of carbamoyl aspartate to dihydroorotate. This is Dihydroorotase from Novosphingobium aromaticivorans (strain ATCC 700278 / DSM 12444 / CCUG 56034 / CIP 105152 / NBRC 16084 / F199).